Reading from the N-terminus, the 278-residue chain is Short-chain dehydrogenase RED2 (278 aa).

NADP(+) contacts are provided by Ile-15, Asp-70, Arg-132, Tyr-178, Lys-182, Val-211, and Thr-213. Tyr-178 (proton donor) is an active-site residue. The Lowers pKa of active site Tyr role is filled by Lys-182.

This sequence belongs to the short-chain dehydrogenases/reductases (SDR) family.

Its pathway is polyketide biosynthesis. Functionally, short-chain dehydrogenase; part of the gene cluster that mediates the biosynthesis of pyriculol and pyriculariol, two heptaketides that induce lesion formation upon application on rice leaves but are dispensable for pathogenicity. The highly reducing polyketide synthase synthesizes the heptaketide backbone of pyriculol and pyriculariol. Pyriculol and pyriculariol contain several hydroxyl moieties and double bonds, so it can be assumed that several reduction steps occur during biosynthesis. These reactions could be executed by PKS19 itself or partly by the tailoring enzymes OXR1, OXR2, RED1, RED2 or RED3, identified within the cluster. The FAD-linked oxidoreductase OXR1 is the only tailoring enzyme for which the function has been determined yet, and is involved in the oxidation of dihydropyriculol and dihydropyriculariol into pyriculol and pyriculariol, respectively. This Pyricularia oryzae (strain 70-15 / ATCC MYA-4617 / FGSC 8958) (Rice blast fungus) protein is Short-chain dehydrogenase RED2.